Here is a 425-residue protein sequence, read N- to C-terminus: Histone-binding protein RBBP4 (425 aa).

Ala2 carries the post-translational modification N-acetylalanine. Lys4 bears the N6-acetyllysine; alternate mark. A Glycyl lysine isopeptide (Lys-Gly) (interchain with G-Cter in SUMO2); alternate cross-link involves residue Lys4. Residue Lys4 forms a Glycyl lysine isopeptide (Lys-Gly) (interchain with G-Cter in ubiquitin); alternate linkage. WD repeat units follow at residues 32 to 125 (YDLV…NHEG), 126 to 175 (EVNR…RLRG), 176 to 223 (HQKE…KTIF), 225 to 270 (GHTA…HSVD), 271 to 314 (AHTA…HSFE), 315 to 371 (SHKD…FIHG), and 372 to 404 (GHTA…VWQM). The residue at position 110 (Ser110) is a Phosphoserine. Position 160 is an N6-acetyllysine; alternate (Lys160). A Glycyl lysine isopeptide (Lys-Gly) (interchain with G-Cter in SUMO2); alternate cross-link involves residue Lys160. Phosphoserine is present on Ser355.

It belongs to the WD repeat RBAP46/RBAP48/MSI1 family. As to quaternary structure, binds directly to helix 1 of the histone fold of histone H4, a region that is not accessible when H4 is in chromatin. Subunit of the chromatin assembly factor 1 (CAF-1) complex, which is composed of RBBP4, CHAF1B and CHAF1A. Subunit of the core histone deacetylase (HDAC) complex, which is composed of HDAC1, HDAC2, RBBP4 and RBBP7. The core HDAC complex associates with SIN3A, ARID4B/SAP180, SAP18, SAP30, SAP130, SUDS3/SAP45 and possibly ARID4A/RBP1 and ING1 to form the SIN3 HDAC complex. Component of the nucleosome remodeling and deacetylase (NuRD) repressor complex, composed of core proteins MTA1, MTA2, MTA3, RBBP4, RBBP7, HDAC1, HDAC2, MBD2, MBD3, and peripherally associated proteins CDK2AP1, CDK2AP2, GATAD2A, GATAD2B, CHD3, CHD4 and CHD5. The exact stoichiometry of the NuRD complex is unknown, and some subunits such as MBD2 and MBD3, GATAD2A and GATAD2B, and CHD3, CHD4 and CHD5 define mutually exclusive NuRD complexes. Interacts with ZNF512B; the interaction is direct and may play a role in repressing gene expression. The NuRD complex may also interact with MBD3L1 and MBD3L2. Component of the PRC2 complex, which consists of the core subunits EED, EZH1 or EZH2, SUZ12, and RBBP4, and various combinations of accessory subunits including AEBP2, JARID2, PHF19, MTF2 and EPOP. Forms a monomeric PRC2.2 (class 2) complex consisting of at least SUZ12, RBBP4, AEBP2 and JARID2. Forms a dimeric PRC2.1 (class 1, PRC-PCL) complex consisting of at least SUZ12, RBBP4, and PHF19; PHF19 stabilizes the dimeric structure which enhances PRC2 interaction with chromatin. Component of the NURF-1 ISWI chromatin remodeling complex (also called the nucleosome-remodeling factor (NURF) complex) at least composed of SMARCA1 (isoform 2), BPTF, RBBP4 and RBBP7. Within the complex interacts with isoform 2 of SMARCA1. Component of the BPFT-SMARCA1 complex at least composed of SMARCA1 (isoform 1), BPFT, RBBP4 and RBBP7; the complex is catalytically inactive and does not remodel chromatin. Within the complex interacts with isoform 1 of SMARCA1. Interacts with the ISWI chromatin remodeling complex component SMARCA5; the interaction is direct. Interacts with the viral protein-binding domain of the retinoblastoma protein (RB1). Component of the DREAM complex (also named LINC complex) at least composed of E2F4, E2F5, LIN9, LIN37, LIN52, LIN54, MYBL1, MYBL2, RBL1, RBL2, RBBP4, TFDP1 and TFDP2. The complex exists in quiescent cells where it represses cell cycle-dependent genes. It dissociates in S phase when LIN9, LIN37, LIN52 and LIN54 form a subcomplex that binds to MYBL2. Found in a complex composed of at least SINHCAF, SIN3A, HDAC1, SAP30, RBBP4, OGT and TET1. Interacts with ZNF827; the interaction is direct and recruits RBBP4 to telomeres. Interacts with MTA1; the interaction is direct and mutually exclusive with binding histone H4. Interacts with ARMC12 (via ARM domains). Interacts with BRCA1. Interacts with CDK2AP1. Interacts with CREBBP, and this interaction may be enhanced by the binding of phosphorylated CREB1 to CREBBP. Interacts with ERCC6. Interacts with HDAC7. Interacts with PHF6. Interacts with PWWP2B. Interacts with SPEN/MINT. Interacts with SUV39H1.

The protein localises to the nucleus. Its subcellular location is the chromosome. It localises to the telomere. In terms of biological role, core histone-binding subunit that may target chromatin assembly factors, chromatin remodeling factors and histone deacetylases to their histone substrates in a manner that is regulated by nucleosomal DNA. Component of the chromatin assembly factor 1 (CAF-1) complex, which is required for chromatin assembly following DNA replication and DNA repair. Component of the core histone deacetylase (HDAC) complex, which promotes histone deacetylation and consequent transcriptional repression. Component of the nucleosome remodeling and histone deacetylase complex (the NuRD complex), which promotes transcriptional repression by histone deacetylation and nucleosome remodeling. Component of the PRC2 complex, which promotes repression of homeotic genes during development. Component of the NURF (nucleosome remodeling factor) complex. This Bos taurus (Bovine) protein is Histone-binding protein RBBP4 (RBBP4).